The chain runs to 190 residues: UPF0340 protein BC_5317 (190 aa).

This sequence belongs to the UPF0340 family.

This chain is UPF0340 protein BC_5317, found in Bacillus cereus (strain ATCC 14579 / DSM 31 / CCUG 7414 / JCM 2152 / NBRC 15305 / NCIMB 9373 / NCTC 2599 / NRRL B-3711).